Consider the following 34-residue polypeptide: MSDIN-like toxin proprotein 12 (34 aa).

Positions Met-1–Pro-10 are excised as a propeptide. The segment at residues His-11–Pro-19 is a cross-link (cyclopeptide (His-Pro)). Positions Cys-20–Gly-34 are excised as a propeptide.

This sequence belongs to the MSDIN fungal toxin family. In terms of processing, processed by the macrocyclase-peptidase enzyme POPB to yield a toxic cyclic nonapeptide. POPB first removes 10 residues from the N-terminus. Conformational trapping of the remaining peptide forces the enzyme to release this intermediate rather than proceed to macrocyclization. The enzyme rebinds the remaining peptide in a different conformation and catalyzes macrocyclization of the N-terminal 9 residues.

Probable toxin that belongs to the MSDIN-like toxin family responsible for a large number of food poisoning cases and deaths. This chain is MSDIN-like toxin proprotein 12, found in Amanita bisporigera (Destroying angel).